The following is a 512-amino-acid chain: Cytochrome P450 72A13 (512 aa).

The helical transmembrane segment at 2 to 22 threads the bilayer; the sequence is EISVASVTVSVAVVVVSWWVW. Cysteine 460 is a binding site for heme.

The protein belongs to the cytochrome P450 family. Heme is required as a cofactor.

It is found in the membrane. This chain is Cytochrome P450 72A13 (CYP72A13), found in Arabidopsis thaliana (Mouse-ear cress).